A 177-amino-acid chain; its full sequence is Adenine phosphoribosyltransferase (177 aa).

This sequence belongs to the purine/pyrimidine phosphoribosyltransferase family. As to quaternary structure, homodimer.

It is found in the cytoplasm. It catalyses the reaction AMP + diphosphate = 5-phospho-alpha-D-ribose 1-diphosphate + adenine. It participates in purine metabolism; AMP biosynthesis via salvage pathway; AMP from adenine: step 1/1. Its function is as follows. Catalyzes a salvage reaction resulting in the formation of AMP, that is energically less costly than de novo synthesis. In Rhodococcus opacus (strain B4), this protein is Adenine phosphoribosyltransferase.